Reading from the N-terminus, the 623-residue chain is Set1/Ash2 histone methyltransferase complex subunit ASH2 (623 aa).

Over residues 1-18 (MAAAGAGPGPGVSAGPGP) the composition is skewed to gly residues. Residues 1-62 (MAAAGAGPGP…SGEAESGDAN (62 aa)) form a PHD-type; atypical zinc finger. The tract at residues 1 to 99 (MAAAGAGPGP…MDTQAGSVDE (99 aa)) is disordered. Residues 36–56 (AAGAGEGPSAAPGAEPSSGEA) are compositionally biased toward low complexity. Residues 63–172 (LVDVSGLETE…MCLSALANLT (110 aa)) form a DNA-binding region. Over residues 84 to 95 (GDTSEVMDTQAG) the composition is skewed to polar residues. Ser96 bears the Phosphoserine mark. Residues 112–145 (CGICTKWFTADTFGIDTSSCLPFMTNYSFHCNVC) form a C4-type zinc finger. Residues 230–247 (LVKEHPDPGSKDPEEDYP) are compositionally biased toward basic and acidic residues. Residues 230 to 326 (LVKEHPDPGS…AQRLPPHGYP (97 aa)) form a disordered region. The span at 265-277 (NQKQSSAVSASGN) shows a compositional bias: polar residues. Positions 278–290 (LNGGIAAGSSGKG) are enriched in gly residues. An Asymmetric dimethylarginine; by PRMT1 and PRMT5 modification is found at Arg291. Ser311 carries the phosphoserine modification. Residues 311 to 623 (SDPLFSAQRL…DGRRSPPWEP (313 aa)) form an interaction with RBBP5 region. The region spanning 355 to 578 (LDCWAGKPIP…VSINFGPSFK (224 aa)) is the B30.2/SPRY domain.

In terms of assembly, interacts with HCFC1. Core component of several methyltransferase-containing complexes including MLL1/MLL, MLL2/3 (also named ASCOM complex) and MLL4/WBP7. Each complex is at least composed of ASH2L, RBBP5, WDR5, DPY30, one or more specific histone methyltransferases (KMT2A/MLL1, KMT2D/MLL2, KMT2C/MLL3 and KMT2B/MLL4), and the facultative components PAGR1, BACC1, CHD8, E2F6, HCFC1, HCFC2, HSP70, INO80C, KDM6A, KANSL1, LAS1L, MAX, MCRS1, MEN1, MGA, KAT8/MOF, NCOA6, PAXIP1/PTIP, PELP1, PHF20, PRP31, RING2, RUVB1/TIP49A, RUVB2/TIP49B, SENP3, TAF1, TAF4, TAF6, TAF7, TAF9, TEX10 and alpha- and beta-tubulin. Component of the SET1 complex, at least composed of the catalytic subunit (SETD1A or SETD1B), WDR5, WDR82, RBBP5, ASH2L/ASH2, CXXC1/CFP1, HCFC1 and DPY30. Found in a complex with RBBP5, ASH2L, DPY30, KMT2A, KMT2D and WDR5. Component of a histone methylation complex composed of at least ZNF335, RBBP5, ASH2L and WDR5; the complex may have histone H3-specific methyltransferase activity, however does not have specificity for 'Lys-4' of histone H3. Within the complex, interacts with ZNF335. Interacts with RBBP5. Components of this complex may associate with components of a nuclear receptor-mediated transcription complex to form a complex at least composed of ZNF335, HCFC1, CCAR2, EMSY, MKI67, RBBP5, ASH2L and WDR5. Within this complex also interacts with CCAR2 and EMSY. Interacts with DPY30. Interacts with SETD1A and SETD1B. In terms of processing, both monomethylated and dimethylated on arginine residues in the C-terminus. Arg-291 is the major site. Methylation is not required for nuclear localization, nor for MLL complex integrity or maintenance of global histone H3K4me3 levels. Ubiquitously expressed, with abundant expression in the heart, skeletal muscle and kidney. Low expression is seen in spleen, lung and testis.

The protein resides in the nucleus. In terms of biological role, transcriptional regulator. Component or associated component of some histone methyltransferase complexes which regulates transcription through recruitment of those complexes to gene promoters. Component of the Set1/Ash2 histone methyltransferase (HMT) complex, a complex that specifically methylates 'Lys-4' of histone H3, but not if the neighboring 'Lys-9' residue is already methylated. As part of the MLL1/MLL complex it is involved in methylation and dimethylation at 'Lys-4' of histone H3. May play a role in hematopoiesis. In association with RBBP5 and WDR5, stimulates the histone methyltransferase activities of KMT2A, KMT2B, KMT2C, KMT2D, SETD1A and SETD1B. The sequence is that of Set1/Ash2 histone methyltransferase complex subunit ASH2 (Ash2l) from Mus musculus (Mouse).